The following is a 443-amino-acid chain: Tubulin beta-2 chain (443 aa).

The MREI motif signature appears at 1–4 (MREI). The GTP site is built by Gln11, Glu69, Ser138, Gly142, Thr143, Gly144, Asn204, and Asn226. A Mg(2+)-binding site is contributed by Glu69. Glu438 carries the post-translational modification 5-glutamyl polyglutamate.

Belongs to the tubulin family. Dimer of alpha and beta chains. A typical microtubule is a hollow water-filled tube with an outer diameter of 25 nm and an inner diameter of 15 nM. Alpha-beta heterodimers associate head-to-tail to form protofilaments running lengthwise along the microtubule wall with the beta-tubulin subunit facing the microtubule plus end conferring a structural polarity. Microtubules usually have 13 protofilaments but different protofilament numbers can be found in some organisms and specialized cells. The cofactor is Mg(2+). In terms of processing, some glutamate residues at the C-terminus are polyglycylated, resulting in polyglycine chains on the gamma-carboxyl group. Glycylation is mainly limited to tubulin incorporated into axonemes (cilia and flagella) whereas glutamylation is prevalent in neuronal cells, centrioles, axonemes, and the mitotic spindle. Both modifications can coexist on the same protein on adjacent residues, and lowering polyglycylation levels increases polyglutamylation, and reciprocally. The precise function of polyglycylation is still unclear. Some glutamate residues at the C-terminus are polyglutamylated, resulting in polyglutamate chains on the gamma-carboxyl group. Polyglutamylation plays a key role in microtubule severing by spastin (SPAST). SPAST preferentially recognizes and acts on microtubules decorated with short polyglutamate tails: severing activity by SPAST increases as the number of glutamates per tubulin rises from one to eight, but decreases beyond this glutamylation threshold. As to expression, nervous system specific.

The protein resides in the cytoplasm. Its subcellular location is the cytoskeleton. Its function is as follows. Tubulin is the major constituent of microtubules, a cylinder consisting of laterally associated linear protofilaments composed of alpha- and beta-tubulin heterodimers. Microtubules grow by the addition of GTP-tubulin dimers to the microtubule end, where a stabilizing cap forms. Below the cap, tubulin dimers are in GDP-bound state, owing to GTPase activity of alpha-tubulin. This is Tubulin beta-2 chain (tubb2) from Xenopus laevis (African clawed frog).